Here is a 199-residue protein sequence, read N- to C-terminus: Tumor necrosis factor ligand superfamily member 4 (199 aa).

Topologically, residues 1–25 (MEGEGVQPPDENLENGSRPRFKWKK) are cytoplasmic. A helical; Signal-anchor for type II membrane protein transmembrane segment spans residues 26-48 (VLRLVVSGIKAAGLLLCVVYVCL). Residues 49-199 (QFSSSPAKDS…YSSTVNQVPL (151 aa)) lie on the Extracellular side of the membrane. In terms of domain architecture, THD spans 59–176 (PIQRLRAPVT…QINDGELIIV (118 aa)). 2 disulfide bridges follow: Cys-70-Cys-163 and Cys-98-Cys-184. Residues Asn-91 and Asn-157 are each glycosylated (N-linked (GlcNAc...) asparagine).

The protein belongs to the tumor necrosis factor family. Homotrimer. As to expression, detected in T-cell lines, but not in a macrophage cell line.

The protein resides in the membrane. Cytokine that binds to TNFRSF4. Co-stimulates T-cell proliferation and cytokine production. The polypeptide is Tumor necrosis factor ligand superfamily member 4 (Tnfsf4) (Rattus norvegicus (Rat)).